Consider the following 183-residue polypeptide: TATA-box-binding protein 2 (183 aa).

Repeat copies occupy residues Ile8 to Leu84 and Val99 to Leu177.

Belongs to the TBP family.

General factor that plays a role in the activation of archaeal genes transcribed by RNA polymerase. Binds specifically to the TATA box promoter element which lies close to the position of transcription initiation. The protein is TATA-box-binding protein 2 of Methanosarcina mazei (strain ATCC BAA-159 / DSM 3647 / Goe1 / Go1 / JCM 11833 / OCM 88) (Methanosarcina frisia).